The sequence spans 348 residues: Mycothiol acetyltransferase (348 aa).

N-acetyltransferase domains follow at residues 12-156 and 169-330; these read TSMR…VDVT and VAVR…HGTP. Glutamate 44 serves as a coordination point for 1D-myo-inositol 2-(L-cysteinylamino)-2-deoxy-alpha-D-glucopyranoside. 91–93 lines the acetyl-CoA pocket; sequence LVV. Residues glutamate 196, lysine 235, and glutamate 253 each contribute to the 1D-myo-inositol 2-(L-cysteinylamino)-2-deoxy-alpha-D-glucopyranoside site. Acetyl-CoA contacts are provided by residues 257–259 and 264–270; these read VGV and QGLGMGR. Position 291 (tyrosine 291) interacts with 1D-myo-inositol 2-(L-cysteinylamino)-2-deoxy-alpha-D-glucopyranoside. Position 296–301 (296–301) interacts with acetyl-CoA; that stretch reads NTVAVH. Residues 320–348 are disordered; it reads PPAGSPAHGTPLVRVTDTPSSPGDATMGS. Polar residues predominate over residues 336-348; that stretch reads DTPSSPGDATMGS.

Belongs to the acetyltransferase family. MshD subfamily. Monomer.

The catalysed reaction is 1D-myo-inositol 2-(L-cysteinylamino)-2-deoxy-alpha-D-glucopyranoside + acetyl-CoA = mycothiol + CoA + H(+). In terms of biological role, catalyzes the transfer of acetyl from acetyl-CoA to desacetylmycothiol (Cys-GlcN-Ins) to form mycothiol. In Cellulomonas flavigena (strain ATCC 482 / DSM 20109 / BCRC 11376 / JCM 18109 / NBRC 3775 / NCIMB 8073 / NRS 134), this protein is Mycothiol acetyltransferase.